The chain runs to 126 residues: Aspartate 1-decarboxylase (126 aa).

Serine 25 functions as the Schiff-base intermediate with substrate; via pyruvic acid in the catalytic mechanism. Serine 25 bears the Pyruvic acid (Ser) mark. Threonine 57 provides a ligand contact to substrate. Tyrosine 58 (proton donor) is an active-site residue. 73–75 (GGA) contacts substrate.

The protein belongs to the PanD family. In terms of assembly, heterooctamer of four alpha and four beta subunits. It depends on pyruvate as a cofactor. Post-translationally, is synthesized initially as an inactive proenzyme, which is activated by self-cleavage at a specific serine bond to produce a beta-subunit with a hydroxyl group at its C-terminus and an alpha-subunit with a pyruvoyl group at its N-terminus.

The protein resides in the cytoplasm. It catalyses the reaction L-aspartate + H(+) = beta-alanine + CO2. It participates in cofactor biosynthesis; (R)-pantothenate biosynthesis; beta-alanine from L-aspartate: step 1/1. Functionally, catalyzes the pyruvoyl-dependent decarboxylation of aspartate to produce beta-alanine. The sequence is that of Aspartate 1-decarboxylase from Xylella fastidiosa (strain M12).